Reading from the N-terminus, the 149-residue chain is Mediator of RNA polymerase II transcription subunit 9 (149 aa).

The interval 18–64 is disordered; sequence TNPTLDKPNAEATKEEFSSAENRDEKDYLTNQQPKNLSTPSTSSNGE. A compositionally biased stretch (basic and acidic residues) spans 25-45; sequence PNAEATKEEFSSAENRDEKDY. The segment covering 46–63 has biased composition (polar residues); sequence LTNQQPKNLSTPSTSSNG. 2 consecutive short sequence motifs (nuclear localization signal) follow at residues 77–99 and 136–149; these read RKDP…HRLK and KRDV…KLQR.

It belongs to the Mediator complex subunit 9 family. In terms of assembly, component of the Mediator complex, which is composed of at least 21 subunits that form three structurally distinct submodules. The Mediator head module contains MED6, MED8, MED11, SRB4/MED17, SRB5/MED18, ROX3/MED19, SRB2/MED20 and SRB6/MED22, the middle module contains MED1, MED4, NUT1/MED5, MED7, CSE2/MED9, NUT2/MED10, SRB7/MED21 and SOH1/MED31, and the tail module contains MED2, PGD1/MED3, RGR1/MED14, GAL11/MED15 and SIN4/MED16. The head and the middle modules interact directly with RNA polymerase II, whereas the elongated tail module interacts with gene-specific regulatory proteins. CSE2/MED9 interacts directly with MED4.

It localises to the nucleus. Component of the Mediator complex, a coactivator involved in the regulated transcription of nearly all RNA polymerase II-dependent genes. Mediator functions as a bridge to convey information from gene-specific regulatory proteins to the basal RNA polymerase II transcription machinery. The Mediator complex, having a compact conformation in its free form, is recruited to promoters by direct interactions with regulatory proteins and serves for the assembly of a functional preinitiation complex with RNA polymerase II and the general transcription factors. The Mediator complex unfolds to an extended conformation and partially surrounds RNA polymerase II, specifically interacting with the unphosphorylated form of the C-terminal domain (CTD) of RNA polymerase II. The Mediator complex dissociates from the RNA polymerase II holoenzyme and stays at the promoter when transcriptional elongation begins. The polypeptide is Mediator of RNA polymerase II transcription subunit 9 (CSE2) (Saccharomyces cerevisiae (strain ATCC 204508 / S288c) (Baker's yeast)).